The following is a 1981-amino-acid chain: Nonribosomal peptide synthetase rstn8 (1981 aa).

Residues 251 to 638 (SYAALEQESA…ELGEIEYQAS (388 aa)) are adenylation. One can recognise a Carrier 1 domain in the interval 763-840 (HHAGQKYDEM…ELFHRSQKTP (78 aa)). At serine 800 the chain carries O-(pantetheine 4'-phosphoryl)serine. Residues 883–1293 (EDIYPCSPLQ…DASMGTILSQ (411 aa)) form a condensation 1 region. Residues 1438–1514 (EPLLPLEATL…CLASTLNSRP (77 aa)) form the Carrier 2 domain. Serine 1475 carries the O-(pantetheine 4'-phosphoryl)serine modification. The condensation 1 stretch occupies residues 1586–1978 (EEQIDLVSFA…TFAQSIERII (393 aa)). Positions 1754 to 1774 (HHHHQHEGRQHHGASETNGNR) are disordered.

The protein belongs to the NRP synthetase family. Requires pantetheine 4'-phosphate as cofactor.

The enzyme catalyses 2 L-tryptophan = cyclo(L-Trp-L-Trp) + 2 H2O. Its pathway is alkaloid biosynthesis. Functionally, nonribosomal peptide synthetase; part of the gene cluster that mediates the biosynthesis of okaramine B, a prenylated indole alkaloid that possesses an unusual octacyclic ring system, including a four-membered azetidine ring and an eight-membered azocine ring, and that exhibits insecticidal activity against silkworm larvae. Within the pathway, okaA acts as a bimodular non-ribosomal peptide synthetase (NRPS) that condenses two tryptophan molecules into cyclo(L-Trp-L-Trp). Prenylation by the prenyltransferase okaC then leads to the formation of cyclo(N8-(alpha,alpha-dimethylallyl)-L-Trp-6a-(alpha,alpha-dime-thylallyl)-L-Trp). This is followed by indole 2,3-epoxidation by the FAD-dependent monooxygenase okaB to facilitate the formation of the hexahydropyrrolo[2,3-b]indole (HPI) moiety of okaramine C. The cytochrome P450 monooxygenase okaD then likely catalyzes formation of the eight-membered ring of okaramine A. The dioxygenase okaE further forms the unusual 2-dimethyl-3-methyl-azetidine ring to yield 12-deshydroxyl okaramine E, as well as the hydroxylation of 12-deshydroxyl okaramine E to produce okaramine E. The cytochrome P450 monoxygenase okaG converts 12-deshydroxyl okaramine E into 3-desmethyl okaramine B which is further methylated by the methyltransferase okaF into okaramine B. In a shunt pathway, okaG and okaF together are also able to convert okaramine E into okaramine D. Okaramine H is produced by nonenzymatic conversion from okaramine A. The sequence is that of Nonribosomal peptide synthetase rstn8 from Penicillium ochrochloron.